Reading from the N-terminus, the 459-residue chain is Cysteine--tRNA ligase (459 aa).

Zn(2+) is bound at residue C28. Residues 30 to 40 carry the 'HIGH' region motif; that stretch reads VTIYDLCHIGH. C209, H234, and E238 together coordinate Zn(2+). The short motif at 266–270 is the 'KMSKS' region element; sequence KMSKS. K269 lines the ATP pocket.

Belongs to the class-I aminoacyl-tRNA synthetase family. In terms of assembly, monomer. It depends on Zn(2+) as a cofactor.

The protein localises to the cytoplasm. The catalysed reaction is tRNA(Cys) + L-cysteine + ATP = L-cysteinyl-tRNA(Cys) + AMP + diphosphate. The chain is Cysteine--tRNA ligase from Shewanella baltica (strain OS195).